The sequence spans 177 residues: Large ribosomal subunit protein uL5 (177 aa).

It belongs to the universal ribosomal protein uL5 family. In terms of assembly, part of the 50S ribosomal subunit; part of the 5S rRNA/L5/L18/L25 subcomplex. Contacts the 5S rRNA and the P site tRNA. Forms a bridge to the 30S subunit in the 70S ribosome.

This is one of the proteins that bind and probably mediate the attachment of the 5S RNA into the large ribosomal subunit, where it forms part of the central protuberance. In the 70S ribosome it contacts protein S13 of the 30S subunit (bridge B1b), connecting the 2 subunits; this bridge is implicated in subunit movement. Contacts the P site tRNA; the 5S rRNA and some of its associated proteins might help stabilize positioning of ribosome-bound tRNAs. This is Large ribosomal subunit protein uL5 from Wolbachia sp. subsp. Brugia malayi (strain TRS).